We begin with the raw amino-acid sequence, 126 residues long: Scygonadin (126 aa).

Positions 1 to 24 are cleaved as a signal peptide; that stretch reads MRSSLLLGLTVVVLLGVIVPPCMA.

As to expression, expressed in the ejaculatory ducts of mature males. Not detected in the ejaculatory ducts of immature males. Not detected in hepatopancreas, female reproductive tract, eyes, exoskeleton, subcuticular epithelia, heart, gills, stomach, muscle and hemocytes.

Its subcellular location is the secreted. In terms of biological role, has antibacterial activity against the Gram-positive bacterium M.luteus with an IC(90) of 125ug/ml. Has weak antibacterial activity against the Gram-negative bacterium A.hydrophila. The polypeptide is Scygonadin (Scylla serrata (Mud crab)).